The sequence spans 88 residues: Meiosis expressed gene 1 protein homolog (88 aa).

It belongs to the MEIG1 family. As to quaternary structure, interacts with PACRG. Interacts with MORN3.

In terms of biological role, essential for spermiogenesis. The polypeptide is Meiosis expressed gene 1 protein homolog (Homo sapiens (Human)).